Consider the following 61-residue polypeptide: DNA-directed RNA polymerase subunit Rpo10 (61 aa).

Zn(2+)-binding residues include cysteine 6, cysteine 9, cysteine 42, and cysteine 43.

It belongs to the archaeal Rpo10/eukaryotic RPB10 RNA polymerase subunit family. Part of the RNA polymerase complex. Zn(2+) serves as cofactor.

The protein localises to the cytoplasm. It catalyses the reaction RNA(n) + a ribonucleoside 5'-triphosphate = RNA(n+1) + diphosphate. DNA-dependent RNA polymerase (RNAP) catalyzes the transcription of DNA into RNA using the four ribonucleoside triphosphates as substrates. The protein is DNA-directed RNA polymerase subunit Rpo10 of Methanothrix thermoacetophila (strain DSM 6194 / JCM 14653 / NBRC 101360 / PT) (Methanosaeta thermophila).